We begin with the raw amino-acid sequence, 406 residues long: Argininosuccinate synthase (406 aa).

ATP is bound by residues A11–S19 and A38. The L-citrulline site is built by Y91 and S96. Position 121 (G121) interacts with ATP. L-aspartate-binding residues include T123, N127, and D128. Position 127 (N127) interacts with L-citrulline. R131, S181, S190, E266, and Y278 together coordinate L-citrulline.

Belongs to the argininosuccinate synthase family. Type 1 subfamily. As to quaternary structure, homotetramer.

It localises to the cytoplasm. The enzyme catalyses L-citrulline + L-aspartate + ATP = 2-(N(omega)-L-arginino)succinate + AMP + diphosphate + H(+). It functions in the pathway amino-acid biosynthesis; L-arginine biosynthesis; L-arginine from L-ornithine and carbamoyl phosphate: step 2/3. The protein is Argininosuccinate synthase of Campylobacter curvus (strain 525.92).